A 386-amino-acid chain; its full sequence is Microtubule-binding protein TANGLED1 (386 aa).

5 disordered regions span residues 83–105, 140–202, 244–266, 303–330, and 345–386; these read RMRG…GVGG, AAGA…RVRS, HAST…QKRL, PARP…CSFS, and RLSL…ISSR. A compositionally biased stretch (basic residues) spans 170–180; sequence RARRAREKQSH. Low complexity predominate over residues 181 to 193; that stretch reads RGGAATRGADAAT. Polar residues predominate over residues 375–386; that stretch reads TVRTVSSKISSR.

Expressed in vegetative shoot tips consisting of leaf primordia and the bases of immature leaves, the shoot apical meristem, and unexpanded stem tissue. Strongly expressed in tissues enriched in dividing cells: ear primordia and embryos.

The protein resides in the cytoplasm. Its subcellular location is the cytoskeleton. It is found in the spindle. It localises to the phragmoplast. Functionally, is required for spatial control cell division during leaf development. Through an association with microtubules, acts both for the positioning of cytoskeletal arrays that establish planes of cell division during prophase and for spatial guidance of expanding phragmoplasts toward preestablished cortical division sites (CDS) during cytokinesis. This Zea mays (Maize) protein is Microtubule-binding protein TANGLED1 (TAN1).